We begin with the raw amino-acid sequence, 169 residues long: Sec-independent protein translocase protein TatB (169 aa).

The chain crosses the membrane as a helical span at residues 2–22; that stretch reads SPGIGMPELLVVLVLALVVVG. Positions 106–169 are disordered; sequence NQAETDADKA…AKPVDEIKGR (64 aa).

This sequence belongs to the TatB family. In terms of assembly, the Tat system comprises two distinct complexes: a TatABC complex, containing multiple copies of TatA, TatB and TatC subunits, and a separate TatA complex, containing only TatA subunits. Substrates initially bind to the TatABC complex, which probably triggers association of the separate TatA complex to form the active translocon.

The protein localises to the cell inner membrane. Functionally, part of the twin-arginine translocation (Tat) system that transports large folded proteins containing a characteristic twin-arginine motif in their signal peptide across membranes. Together with TatC, TatB is part of a receptor directly interacting with Tat signal peptides. TatB may form an oligomeric binding site that transiently accommodates folded Tat precursor proteins before their translocation. The protein is Sec-independent protein translocase protein TatB of Maricaulis maris (strain MCS10) (Caulobacter maris).